The sequence spans 309 residues: Protein phosphatase 1 regulatory subunit 42 (309 aa).

7 LRR repeats span residues 29 to 50, 51 to 72, 73 to 94, 95 to 116, 117 to 138, 147 to 168, and 169 to 190; these read KITH…SLCK, NLSV…NYAT, NLTH…RSLK, KLEK…EGLG, ELRE…LFDP, SLCI…ELLE, and NLNQ…EFLL. Residues 204 to 242 form the LRRCT domain; it reads NPVCLKPKYRDRLILVSKSLEFLDGKEIKNIERQFLMNW.

In terms of assembly, interacts with PPP1CC isoform gamma-2; the interaction is direct. Interacts with actin, dynein, KIF5B, KIFC1 and tubulin. Associates with microtubules. Phosphorylated; in the testis.

Its subcellular location is the cytoplasm. It is found in the cytoskeleton. The protein localises to the microtubule organizing center. It localises to the centrosome. Regulates phosphatase activity of protein phosphatase 1 (PP1) complexes in the testis. This chain is Protein phosphatase 1 regulatory subunit 42, found in Homo sapiens (Human).